A 344-amino-acid polypeptide reads, in one-letter code: Probable dual-specificity RNA methyltransferase RlmN (344 aa).

Glu89 functions as the Proton acceptor in the catalytic mechanism. The 235-residue stretch at 95-329 folds into the Radical SAM core domain; sequence TDQRLTVCVS…VSLRASRGLD (235 aa). Cys102 and Cys334 are disulfide-bonded. 3 residues coordinate [4Fe-4S] cluster: Cys109, Cys113, and Cys116. S-adenosyl-L-methionine contacts are provided by residues 156–157, Ser186, 215–217, and Asn291; these read GE and SLH. Cys334 acts as the S-methylcysteine intermediate in catalysis.

The protein belongs to the radical SAM superfamily. RlmN family. It depends on [4Fe-4S] cluster as a cofactor.

Its subcellular location is the cytoplasm. The catalysed reaction is adenosine(2503) in 23S rRNA + 2 reduced [2Fe-2S]-[ferredoxin] + 2 S-adenosyl-L-methionine = 2-methyladenosine(2503) in 23S rRNA + 5'-deoxyadenosine + L-methionine + 2 oxidized [2Fe-2S]-[ferredoxin] + S-adenosyl-L-homocysteine. The enzyme catalyses adenosine(37) in tRNA + 2 reduced [2Fe-2S]-[ferredoxin] + 2 S-adenosyl-L-methionine = 2-methyladenosine(37) in tRNA + 5'-deoxyadenosine + L-methionine + 2 oxidized [2Fe-2S]-[ferredoxin] + S-adenosyl-L-homocysteine. Its function is as follows. Specifically methylates position 2 of adenine 2503 in 23S rRNA and position 2 of adenine 37 in tRNAs. The sequence is that of Probable dual-specificity RNA methyltransferase RlmN from Parasynechococcus marenigrum (strain WH8102).